A 419-amino-acid polypeptide reads, in one-letter code: Putative actin-fragmin kinase DDB_G0279609 (419 aa).

The segment at 73 to 94 is disordered; the sequence is INNNNNSINNNNNNNNKNKNKN.

Belongs to the protein kinase superfamily. AFK Ser/Thr protein kinase family.

This Dictyostelium discoideum (Social amoeba) protein is Putative actin-fragmin kinase DDB_G0279609.